Reading from the N-terminus, the 284-residue chain is Phospholipid phosphatase 1 (284 aa).

The Cytoplasmic segment spans residues 1 to 6 (MFDKTR). A PDZ-binding; involved in localization to the apical cell membrane motif is present at residues 5-7 (TRL). Residues 7–27 (LPYVALDVLCVLLAGLPFAIL) form a helical membrane-spanning segment. Topologically, residues 28 to 53 (TSRHTPFQRGVFCNDESIKYPYKEDT) are extracellular. Residues 54–74 (IPYALLGGIIIPFSIIVIILG) traverse the membrane as a helical segment. At 75 to 94 (ETLSVYCNLLHSNSFIRNNY) the chain is on the cytoplasmic side. The chain crosses the membrane as a helical span at residues 95–115 (IATIYKAIGTFLFGAAASQSL). Topologically, residues 116–164 (TDIAKYSIGRLRPHFLDVCDPDWSKINCSDGYIEYYICRGNAERVKEGR) are extracellular. Residues 120–128 (KYSIGRLRP) form a phosphatase sequence motif I region. N-linked (GlcNAc...) asparagine glycosylation occurs at N142. A helical membrane pass occupies residues 165–185 (LSFYSGHSSFSMYCMLFVALY). The tract at residues 168 to 171 (YSGH) is phosphatase sequence motif II. Residue H171 is the Proton donors of the active site. The Cytoplasmic segment spans residues 186-199 (LQARMKGDWARLLR). The helical transmembrane segment at 200–220 (PTLQFGLVAVSIYVGLSRVSD) threads the bilayer. The interval 216 to 227 (SRVSDYKHHWSD) is phosphatase sequence motif III. At 221 to 229 (YKHHWSDVL) the chain is on the extracellular side. Catalysis depends on H223, which acts as the Nucleophile. Residues 230 to 250 (TGLIQGALVAILVAVYVSDFF) form a helical membrane-spanning segment. Over 251–284 (KERTSFKERKEEDSHTTLHETPTTGNHYPSNHQP) the chain is Cytoplasmic. The tract at residues 260–284 (KEEDSHTTLHETPTTGNHYPSNHQP) is disordered. Over residues 269–284 (HETPTTGNHYPSNHQP) the composition is skewed to polar residues.

Belongs to the PA-phosphatase related phosphoesterase family. Forms functional homodimers and homooligomers that are not required for substrate recognition and catalytic activity. Can also form heterooligomers with PLPP2 and PLPP3. Post-translationally, N-glycosylated. N-linked sugars are of the complex type. N-glycosylation is not required for the phosphatase activity. As to expression, widely expressed with highest expression found in prostate. Found to be down-regulated in colon adenocarcinomas. In terms of tissue distribution, predominant in kidney, lung, placenta and liver. Predominant in heart and pancreas.

Its subcellular location is the cell membrane. It is found in the apical cell membrane. It localises to the membrane raft. The protein localises to the membrane. The protein resides in the caveola. The catalysed reaction is a 1,2-diacyl-sn-glycero-3-phosphate + H2O = a 1,2-diacyl-sn-glycerol + phosphate. It catalyses the reaction 1,2-dihexadecanoyl-sn-glycero-3-phosphate + H2O = 1,2-dihexadecanoyl-sn-glycerol + phosphate. It carries out the reaction 1,2-di-(9Z-octadecenoyl)-sn-glycero-3-phosphate + H2O = 1,2-di-(9Z-octadecenoyl)-sn-glycerol + phosphate. The enzyme catalyses a monoacyl-sn-glycero-3-phosphate + H2O = a monoacylglycerol + phosphate. The catalysed reaction is (9Z)-octadecenoyl-sn-glycero-3-phosphate + H2O = (9Z-octadecenoyl)-glycerol + phosphate. It catalyses the reaction a 1-acyl-sn-glycero-3-phosphate + H2O = a 1-acyl-sn-glycerol + phosphate. It carries out the reaction 1-(9Z-octadecenoyl)-sn-glycero-3-phosphate + H2O = 1-(9Z-octadecenoyl)-sn-glycerol + phosphate. The enzyme catalyses a 1,2-diacyl-sn-glycerol 3-diphosphate + H2O = a 1,2-diacyl-sn-glycero-3-phosphate + phosphate + H(+). The catalysed reaction is sphing-4-enine 1-phosphate + H2O = sphing-4-enine + phosphate. It catalyses the reaction an N-acylsphing-4-enine 1-phosphate + H2O = an N-acylsphing-4-enine + phosphate. It carries out the reaction N-(octanoyl)-sphing-4-enine-1-phosphate + H2O = N-octanoylsphing-4-enine + phosphate. The enzyme catalyses N-(9Z-octadecenoyl)-ethanolamine phosphate + H2O = N-(9Z-octadecenoyl) ethanolamine + phosphate. The catalysed reaction is 1-hexadecanoyl-2-(9Z-octadecenoyl)-sn-glycero-3-phosphate + H2O = 1-hexadecanoyl-2-(9Z-octadecenoyl)-sn-glycerol + phosphate. It participates in lipid metabolism; phospholipid metabolism. Its activity is regulated as follows. Magnesium-independent phospholipid phosphatase. Insensitive to N-ethylmaleimide. Inhibited by sphingosine, zinc ions and modestly by propanolol. Inhibited by vanadate. Functionally, magnesium-independent phospholipid phosphatase of the plasma membrane that catalyzes the dephosphorylation of a variety of glycerolipid and sphingolipid phosphate esters including phosphatidate/PA, lysophosphatidate/LPA, diacylglycerol pyrophosphate/DGPP, sphingosine 1-phosphate/S1P and ceramide 1-phosphate/C1P. Also acts on N-oleoyl ethanolamine phosphate/N-(9Z-octadecenoyl)-ethanolamine phosphate, a potential physiological compound. Through its extracellular phosphatase activity allows both the hydrolysis and the cellular uptake of these bioactive lipid mediators from the milieu, regulating signal transduction in different cellular processes. It is for instance essential for the extracellular hydrolysis of S1P and subsequent conversion into intracellular S1P. Involved in the regulation of inflammation, platelets activation, cell proliferation and migration among other processes. May also have an intracellular activity to regulate phospholipid-mediated signaling pathways. This chain is Phospholipid phosphatase 1, found in Homo sapiens (Human).